The primary structure comprises 93 residues: Protamine-3 (93 aa).

A disordered region spans residues 1–93 (MGSRCAKLGT…QSPEPKQTRS (93 aa)). Positions 37-57 (EGEEEEEGEEEEEEEGEEEEL) are enriched in acidic residues. The segment covering 81-93 (EVQQSPEPKQTRS) has biased composition (polar residues). At S85 the chain carries Phosphoserine.

The protein belongs to the protamine P3 family.

It localises to the nucleus. It is found in the chromosome. Its function is as follows. Protamines substitute for histones in the chromatin of sperm during the haploid phase of spermatogenesis. They compact sperm DNA into a highly condensed, stable and inactive complex. The polypeptide is Protamine-3 (PRM3) (Bos taurus (Bovine)).